Here is a 319-residue protein sequence, read N- to C-terminus: Cobalamin biosynthesis protein CobD (319 aa).

Helical transmembrane passes span 55 to 75 (AVMW…VLAL), 78 to 98 (EIHP…VLAG), 153 to 173 (VDGI…LAMA), and 296 to 316 (LMWV…CLLV).

It belongs to the CobD/CbiB family.

It is found in the cell membrane. It participates in cofactor biosynthesis; adenosylcobalamin biosynthesis. Converts cobyric acid to cobinamide by the addition of aminopropanol on the F carboxylic group. The sequence is that of Cobalamin biosynthesis protein CobD from Citrobacter koseri (strain ATCC BAA-895 / CDC 4225-83 / SGSC4696).